A 251-amino-acid chain; its full sequence is tRNA (guanine-N(1)-)-methyltransferase (251 aa).

S-adenosyl-L-methionine-binding positions include Gly122 and 142 to 147; that span reads IGDYVL. The interval 226-251 is disordered; that stretch reads RARRPDLFATRPQPNRQKPPKNTTDG. The segment covering 237-251 has biased composition (polar residues); the sequence is PQPNRQKPPKNTTDG.

This sequence belongs to the RNA methyltransferase TrmD family. In terms of assembly, homodimer.

The protein localises to the cytoplasm. It carries out the reaction guanosine(37) in tRNA + S-adenosyl-L-methionine = N(1)-methylguanosine(37) in tRNA + S-adenosyl-L-homocysteine + H(+). In terms of biological role, specifically methylates guanosine-37 in various tRNAs. The chain is tRNA (guanine-N(1)-)-methyltransferase from Rhodopseudomonas palustris (strain BisB18).